The sequence spans 93 residues: YcgL domain-containing protein VIBHAR_01387 (93 aa).

Residues 1–84 (MLCSIYKSSR…PPENLLEKYK (84 aa)) form the YcgL domain.

This is YcgL domain-containing protein VIBHAR_01387 from Vibrio campbellii (strain ATCC BAA-1116).